Consider the following 462-residue polypeptide: Serine--tRNA ligase, cytoplasmic (462 aa).

246–248 (TSE) provides a ligand contact to L-serine. ATP contacts are provided by residues 279–281 (RRE) and V295. E302 contacts L-serine. 366–369 (ELVS) lines the ATP pocket. Residue T404 coordinates L-serine.

It belongs to the class-II aminoacyl-tRNA synthetase family. Type-1 seryl-tRNA synthetase subfamily. In terms of assembly, homodimer. The tRNA molecule binds across the dimer.

It is found in the cytoplasm. It localises to the cytosol. It carries out the reaction tRNA(Ser) + L-serine + ATP = L-seryl-tRNA(Ser) + AMP + diphosphate + H(+). Its function is as follows. Catalyzes the attachment of serine to tRNA(Ser) in a two-step reaction: serine is first activated by ATP to form Ser-AMP and then transferred to the acceptor end of tRNA(Ser). This is Serine--tRNA ligase, cytoplasmic (SES1) from Candida albicans (strain SC5314 / ATCC MYA-2876) (Yeast).